Consider the following 232-residue polypeptide: Thrombin-like enzyme BjussuSP-1 (232 aa).

In terms of domain architecture, Peptidase S1 spans V1–A223. 6 disulfides stabilise this stretch: C7–C138, C25–C41, C73–C230, C117–C184, C149–C163, and C174–C199. H40 functions as the Charge relay system in the catalytic mechanism. Residue N77 is glycosylated (N-linked (GlcNAc...) asparagine). The active-site Charge relay system is the D85. The N-linked (GlcNAc...) asparagine glycan is linked to N129. The active-site Charge relay system is the S178.

Belongs to the peptidase S1 family. Snake venom subfamily. As to quaternary structure, monomer. Post-translationally, N-glycosylated. Contains sialic acid residues. Deglycosylation reduces in 50% the formation of fibrin clot. In terms of tissue distribution, expressed by the venom gland.

Its subcellular location is the secreted. With respect to regulation, inhibited by leupeptin, heparin, and 1.10-phenantroline. Functionally, thrombin-like enzyme that shows clotting activity upon human plasma. Shows specific fibrinogenolytic activity for Aalpha chain (FGA). Hydrolyzes fibrin, BAPNA and TAME, as well as chromogenic artificial substrates of the blood coagulation cascasde: S-27654 for factor X (F10), S-2302 for kallikrein (KLK), factor XIa (F11), and XIIa (F12), and S-2266 for kallikrein and factor XIa (F11). Subcutaneous injection into mice induces a mild edema. Intravenous and intramuscular injection reduce plasma fibrinogen concentration and increase the levels of fibrin(ogen) degradation products. Intramuscular injection also promotes an increase in the expression of proMMP-9, but is unable to activate it. The protein is Thrombin-like enzyme BjussuSP-1 of Bothrops jararacussu (Jararacussu).